The chain runs to 145 residues: D-aminoacyl-tRNA deacylase (145 aa).

Positions 137-138 (GP) match the Gly-cisPro motif, important for rejection of L-amino acids motif.

The protein belongs to the DTD family. As to quaternary structure, homodimer.

It localises to the cytoplasm. The enzyme catalyses glycyl-tRNA(Ala) + H2O = tRNA(Ala) + glycine + H(+). It carries out the reaction a D-aminoacyl-tRNA + H2O = a tRNA + a D-alpha-amino acid + H(+). In terms of biological role, an aminoacyl-tRNA editing enzyme that deacylates mischarged D-aminoacyl-tRNAs. Also deacylates mischarged glycyl-tRNA(Ala), protecting cells against glycine mischarging by AlaRS. Acts via tRNA-based rather than protein-based catalysis; rejects L-amino acids rather than detecting D-amino acids in the active site. By recycling D-aminoacyl-tRNA to D-amino acids and free tRNA molecules, this enzyme counteracts the toxicity associated with the formation of D-aminoacyl-tRNA entities in vivo and helps enforce protein L-homochirality. The polypeptide is D-aminoacyl-tRNA deacylase (Klebsiella pneumoniae subsp. pneumoniae (strain ATCC 700721 / MGH 78578)).